A 198-amino-acid polypeptide reads, in one-letter code: Inner membrane-spanning protein YciB (198 aa).

5 helical membrane-spanning segments follow: residues 36–56 (IYSA…ALFL), 64–84 (GQLL…AFHS), 90–110 (WKAP…HFIG), 135–155 (VAWI…AFTF), and 162–182 (FKVF…GVYL).

The protein belongs to the YciB family.

It localises to the cell inner membrane. Its function is as follows. Plays a role in cell envelope biogenesis, maintenance of cell envelope integrity and membrane homeostasis. This Pseudomonas entomophila (strain L48) protein is Inner membrane-spanning protein YciB.